Consider the following 471-residue polypeptide: Glutamate--tRNA ligase (471 aa).

The short motif at 9–19 is the 'HIGH' region element; the sequence is PSPTGYLHVGG. Positions 98, 100, 125, and 127 each coordinate Zn(2+). A 'KMSKS' region motif is present at residues 237–241; sequence KLSKR. Residue K240 coordinates ATP.

Belongs to the class-I aminoacyl-tRNA synthetase family. Glutamate--tRNA ligase type 1 subfamily. In terms of assembly, monomer. Zn(2+) serves as cofactor.

The protein localises to the cytoplasm. The enzyme catalyses tRNA(Glu) + L-glutamate + ATP = L-glutamyl-tRNA(Glu) + AMP + diphosphate. Catalyzes the attachment of glutamate to tRNA(Glu) in a two-step reaction: glutamate is first activated by ATP to form Glu-AMP and then transferred to the acceptor end of tRNA(Glu). In Shigella boydii serotype 4 (strain Sb227), this protein is Glutamate--tRNA ligase.